The following is a 320-amino-acid chain: Polyprenyl transferase pyr6 (320 aa).

The next 6 membrane-spanning stretches (helical) occupy residues 22 to 42, 60 to 80, 101 to 121, 127 to 147, 155 to 175, and 186 to 206; these read KYNCLFAIFPGVWSIFLAAAS, GLAFAYTYLLSGAGMVWNDWI, LATRAAIIWMLVQYAASVWLM, GQNLWTFMLPLTTGIILYPFG, LGIYPQYILGASSALTILPAW, and PDLLAKCLPLCVFLFLWTIYF. Asn224 is a glycosylation site (N-linked (GlcNAc...) asparagine). Residues 233–253 traverse the membrane as a helical segment; sequence YVHGLLLLQAVAVVMVIPWIL. Asn256 is a glycosylation site (N-linked (GlcNAc...) asparagine). 2 helical membrane-spanning segments follow: residues 260-280 and 296-316; these read WLWFSWLGVWTAALAEQLYLF and FALGIWNVLACFVELLLVSGS.

It belongs to the UbiA prenyltransferase family. Mg(2+) is required as a cofactor.

The protein localises to the membrane. It carries out the reaction 4-hydroxy-6-(pyridin-3-yl)-2H-pyran-2-one + (2E,6E)-farnesyl diphosphate = 4-hydroxy-3-[(2E,6E)-farnesyl]-6-(pyridin-3-yl)-2H-pyran-2-one + diphosphate. The protein operates within secondary metabolite biosynthesis; terpenoid biosynthesis. Its function is as follows. Polyprenyl transferase; part of the gene cluster that mediates the biosynthesis of pyripyropene A, a specific human acyl-coenzyme A:cholesterol acyltransferase 2 inhibitor. The first step of the pathway is the synthesis of nicotinyl-CoA from nicotinic acid by the nicotinic acid-CoA ligase pyr1. Nicotinyl-CoA is then a substrate of polyketide synthase pyr2 to produce 4-hydroxy-6-(3-pyridinyl)-2H-pyran-2-one (HPPO) which is further prenylated by the polyprenyl transferase pyr6 to yield farnesyl-HPPO. The next steps consist of an epoxidation of farnesyl-HPPO to epoxyfarnesyl-HPPO by FAD-dependent monooxygenase pyr5 and a cyclization of the terpenoid portion by the terpene cyclase pyr4 to yield deacetyl-pyripyropene E. The 2 cytochrome P450 monooxygenases pyr3 and pyr9, and the 2 acetyltransferases pyr7 and pyr8 are involved in the conversion of deacetyl-pyripyropene E into pyripyropene A through several cycles of oxidation and acetylation steps. Pyr7 acetylates deacetyl-pyripyropene E to pyripyropene E which is oxidized to 11-deacetyl-pyripyropene O by pyr3, which is in turn acetylated into pyripyropene O by pyr8. Pyripyropene O is then oxidized to deacetyl-pyripyropene A by pyr9. Deacetyl-pyripyropene A is finally acetylated to pyripyropene A by pyr8. The chain is Polyprenyl transferase pyr6 from Aspergillus fumigatus (strain ATCC MYA-4609 / CBS 101355 / FGSC A1100 / Af293) (Neosartorya fumigata).